The following is a 435-amino-acid chain: MKVYKGEVNALPPDKSIAHRAALIGAVADGTTEISNFSGGFDNQSTLGVLQACGIAVHQEKLKGPNGLISRNVVIHAQGFWSLSRPEKDLMCNNSGSTMRMFAGILAAQPFESRLAGDSSLMKRPMQRVAHPLRLMGADVALSSDNTAPVAIRGTTHLRPIDYELPVPSAQVKSLVALAALHAEGESRVIETLPSRNHTELMLGLKVEALSDGRSAVIIPGRKTVPAKPFHIPGDPSAACFIIALGLLSAGSEIVVRDVCLNPTRTGYMGVLLGAGAEISMENIRFAGGEKIGDVLVRHSPSMKPLSISDPAVVANSIDEIPMLAVLSACATGAFELYNAAELRAKESDRISAVVDNLERIGFVCDEYADGFAVTGRKDVTPTGKVAIDSYDDHRIAMSFAIADRVVPMELDISDAKVIGVSFPDFFEIIESLAT.

Lys-15, Ser-16, and Arg-20 together coordinate 3-phosphoshikimate. Position 15 (Lys-15) interacts with phosphoenolpyruvate. Gly-96 and Arg-124 together coordinate phosphoenolpyruvate. Residues Ser-169, Gln-171, Ser-195, Asp-319, and Lys-346 each coordinate 3-phosphoshikimate. A phosphoenolpyruvate-binding site is contributed by Gln-171. Asp-319 (proton acceptor) is an active-site residue. Phosphoenolpyruvate contacts are provided by Arg-350 and Arg-395.

It belongs to the EPSP synthase family. As to quaternary structure, monomer.

It localises to the cytoplasm. The enzyme catalyses 3-phosphoshikimate + phosphoenolpyruvate = 5-O-(1-carboxyvinyl)-3-phosphoshikimate + phosphate. The protein operates within metabolic intermediate biosynthesis; chorismate biosynthesis; chorismate from D-erythrose 4-phosphate and phosphoenolpyruvate: step 6/7. Its function is as follows. Catalyzes the transfer of the enolpyruvyl moiety of phosphoenolpyruvate (PEP) to the 5-hydroxyl of shikimate-3-phosphate (S3P) to produce enolpyruvyl shikimate-3-phosphate and inorganic phosphate. In Chlorobium phaeobacteroides (strain BS1), this protein is 3-phosphoshikimate 1-carboxyvinyltransferase.